The primary structure comprises 281 residues: NADPH-dependent 7-cyano-7-deazaguanine reductase (281 aa).

Residue 81-83 participates in substrate binding; sequence VES. Residue 83 to 84 coordinates NADPH; that stretch reads SK. Cys188 serves as the catalytic Thioimide intermediate. Asp195 serves as the catalytic Proton donor. Residue 227–228 coordinates substrate; it reads HE. 256–257 contacts NADPH; sequence RG.

The protein belongs to the GTP cyclohydrolase I family. QueF type 2 subfamily. In terms of assembly, homodimer.

It localises to the cytoplasm. The catalysed reaction is 7-aminomethyl-7-carbaguanine + 2 NADP(+) = 7-cyano-7-deazaguanine + 2 NADPH + 3 H(+). It participates in tRNA modification; tRNA-queuosine biosynthesis. Catalyzes the NADPH-dependent reduction of 7-cyano-7-deazaguanine (preQ0) to 7-aminomethyl-7-deazaguanine (preQ1). The polypeptide is NADPH-dependent 7-cyano-7-deazaguanine reductase (Acidovorax ebreus (strain TPSY) (Diaphorobacter sp. (strain TPSY))).